The following is an 865-amino-acid chain: Leucine--tRNA ligase (865 aa).

Residues 48-58 carry the 'HIGH' region motif; the sequence is PYPSGQLHVGH. Positions 626-630 match the 'KMSKS' region motif; it reads KMSKS. Lys-629 serves as a coordination point for ATP.

Belongs to the class-I aminoacyl-tRNA synthetase family.

It is found in the cytoplasm. The enzyme catalyses tRNA(Leu) + L-leucine + ATP = L-leucyl-tRNA(Leu) + AMP + diphosphate. In Gluconobacter oxydans (strain 621H) (Gluconobacter suboxydans), this protein is Leucine--tRNA ligase.